We begin with the raw amino-acid sequence, 396 residues long: MPLSYSAAAAAAPSPLAARSRGLLRRPPRSSPVVVRCKKIDQLRAVNGIPPYAPVSNRSLLSPVTLPIIRDANIKNDTRLRIFSGTANPSLSQEIASYLGLELGKINIKRFADGEIYVQLQESVRGCDVFLVQPTCPPANENLMELLIMIDACRRASAKNITAVIPYFGYARADRKSQGRESIAAKLVANMITEAGANRVLVCDLHSSQAMGYFDIPVDHVYGQPVILDYLASKTICSDDLVVVSPDVGGVARARAFAKKLSDAPLAIVDKRRHGHNVAEVMNLIGDVRGKVAVMMDDMIDTAGTIAKGAELLHQEGAREVYACCTHAVFSPPAIERLSSGLFQEVIITNTIPLKEDKSFPQLTILSVANLLGETIWRVHDDCSVGHEPYSSLDID.

The transit peptide at 1-36 (MPLSYSAAAAAAPSPLAARSRGLLRRPPRSSPVVVR) directs the protein to the chloroplast. Residues Asp204, His206, Asp215, and Asp219 each contribute to the Mg(2+) site. A binding of phosphoribosylpyrophosphate region spans residues 290-305 (GKVAVMMDDMIDTAGT).

Belongs to the ribose-phosphate pyrophosphokinase family. Mg(2+) is required as a cofactor.

Its subcellular location is the plastid. It is found in the chloroplast. It carries out the reaction D-ribose 5-phosphate + ATP = 5-phospho-alpha-D-ribose 1-diphosphate + AMP + H(+). The polypeptide is Ribose-phosphate pyrophosphokinase 1, chloroplastic (Oryza sativa subsp. japonica (Rice)).